Consider the following 61-residue polypeptide: Metallothionein-I, hippocampal (61 aa).

Met1 bears the N-acetylmethionine mark. Residues 1–29 (MDPNCSCATGDSCACASTCKCKECKCTSC) form a beta region. A divalent metal cation contacts are provided by Cys5, Cys7, Cys13, Cys15, Cys19, Cys21, Cys24, Cys26, Cys29, Cys33, Cys34, Cys36, Cys37, Cys41, Cys44, Cys48, Cys50, and Cys57. The alpha stretch occupies residues 30–61 (KKSCCSCCPVGCAKCAQGCICKGASDKCSCCA). Ser58 is modified (phosphoserine). A divalent metal cation is bound by residues Cys59 and Cys60.

Belongs to the metallothionein superfamily. Type 1 family.

Functionally, metallothioneins have a high content of cysteine residues that bind various heavy metals; these proteins are transcriptionally regulated by both heavy metals and glucocorticoids. This isoform may play a role in regulating the transport, accumulation, and compartmentation of zinc in the hippocampus. This chain is Metallothionein-I, hippocampal, found in Bos taurus (Bovine).